A 273-amino-acid chain; its full sequence is Large ribosomal subunit protein uL2cz/uL2cy (273 aa).

Disordered regions lie at residues 1–20 and 225–273; these read MAKHLYKTPIPSTRKGTIDR and PVDH…RRRK.

Belongs to the universal ribosomal protein uL2 family. In terms of assembly, part of the 50S ribosomal subunit.

Its subcellular location is the plastid. It localises to the chloroplast. The protein is Large ribosomal subunit protein uL2cz/uL2cy (rpl2-A) of Oryza nivara (Indian wild rice).